The sequence spans 219 residues: Thiopurine S-methyltransferase (219 aa).

S-adenosyl-L-methionine is bound by residues Trp10, Leu45, Glu66, and Arg123.

This sequence belongs to the class I-like SAM-binding methyltransferase superfamily. TPMT family.

The protein resides in the cytoplasm. It carries out the reaction S-adenosyl-L-methionine + a thiopurine = S-adenosyl-L-homocysteine + a thiopurine S-methylether.. This is Thiopurine S-methyltransferase from Bordetella bronchiseptica (strain ATCC BAA-588 / NCTC 13252 / RB50) (Alcaligenes bronchisepticus).